The primary structure comprises 62 residues: Large ribosomal subunit protein uL30 (62 aa).

This sequence belongs to the universal ribosomal protein uL30 family. In terms of assembly, part of the 50S ribosomal subunit.

This is Large ribosomal subunit protein uL30 from Ruegeria pomeroyi (strain ATCC 700808 / DSM 15171 / DSS-3) (Silicibacter pomeroyi).